Consider the following 110-residue polypeptide: Small EDRK-rich factor 1 (110 aa).

A compositionally biased stretch (basic and acidic residues) spans 1 to 30 (MARGNQRELARQKNMKKTQEISKGKRKEDS). The disordered stretch occupies residues 1-61 (MARGNQRELA…GPHLPLKAPR (61 aa)). Residues 11-17 (RQKNMKK) form a required for SNCA binding region. The span at 34–50 (SQRKQSSGGQKSESKMS) shows a compositional bias: low complexity.

This sequence belongs to the SERF family. Interacts with SNCA; this interaction promotes the aggregation of SNCA. In terms of tissue distribution, isoform Long is predominantly expressed in heart, brain and skeletal muscle. Isoform Short and Isoform Long are expressed throughout the central nervous system, including spinal cord.

The protein localises to the cytoplasm. Its subcellular location is the cytosol. The protein resides in the nucleus. In terms of biological role, positive regulator of amyloid protein aggregation and proteotoxicity. Induces conformational changes in amyloid proteins, such as APP, HTT, and SNCA, driving them into compact formations preceding the formation of aggregates. This is Small EDRK-rich factor 1 (SERF1A) from Homo sapiens (Human).